We begin with the raw amino-acid sequence, 98 residues long: Aspartyl/glutamyl-tRNA(Asn/Gln) amidotransferase subunit C (98 aa).

Belongs to the GatC family. In terms of assembly, heterotrimer of A, B and C subunits.

The enzyme catalyses L-glutamyl-tRNA(Gln) + L-glutamine + ATP + H2O = L-glutaminyl-tRNA(Gln) + L-glutamate + ADP + phosphate + H(+). It carries out the reaction L-aspartyl-tRNA(Asn) + L-glutamine + ATP + H2O = L-asparaginyl-tRNA(Asn) + L-glutamate + ADP + phosphate + 2 H(+). Its function is as follows. Allows the formation of correctly charged Asn-tRNA(Asn) or Gln-tRNA(Gln) through the transamidation of misacylated Asp-tRNA(Asn) or Glu-tRNA(Gln) in organisms which lack either or both of asparaginyl-tRNA or glutaminyl-tRNA synthetases. The reaction takes place in the presence of glutamine and ATP through an activated phospho-Asp-tRNA(Asn) or phospho-Glu-tRNA(Gln). This Gloeothece citriformis (strain PCC 7424) (Cyanothece sp. (strain PCC 7424)) protein is Aspartyl/glutamyl-tRNA(Asn/Gln) amidotransferase subunit C.